Here is a 340-residue protein sequence, read N- to C-terminus: Ketol-acid reductoisomerase (NADP(+)) (340 aa).

The 183-residue stretch at 1–183 (MAITVYYDKD…GGGRTGIIET (183 aa)) folds into the KARI N-terminal Rossmann domain. NADP(+)-binding positions include 26-29 (FGSQ), Ser54, and 84-87 (DEFQ). His109 is an active-site residue. Gly135 contributes to the NADP(+) binding site. The KARI C-terminal knotted domain occupies 184–329 (TFKAETETDL…EKLRGMMPWI (146 aa)). Mg(2+)-binding residues include Asp192, Glu196, Glu228, and Glu232. Ser253 contributes to the substrate binding site.

Belongs to the ketol-acid reductoisomerase family. It depends on Mg(2+) as a cofactor.

It carries out the reaction (2R)-2,3-dihydroxy-3-methylbutanoate + NADP(+) = (2S)-2-acetolactate + NADPH + H(+). It catalyses the reaction (2R,3R)-2,3-dihydroxy-3-methylpentanoate + NADP(+) = (S)-2-ethyl-2-hydroxy-3-oxobutanoate + NADPH + H(+). The protein operates within amino-acid biosynthesis; L-isoleucine biosynthesis; L-isoleucine from 2-oxobutanoate: step 2/4. It functions in the pathway amino-acid biosynthesis; L-valine biosynthesis; L-valine from pyruvate: step 2/4. Its function is as follows. Involved in the biosynthesis of branched-chain amino acids (BCAA). Catalyzes an alkyl-migration followed by a ketol-acid reduction of (S)-2-acetolactate (S2AL) to yield (R)-2,3-dihydroxy-isovalerate. In the isomerase reaction, S2AL is rearranged via a Mg-dependent methyl migration to produce 3-hydroxy-3-methyl-2-ketobutyrate (HMKB). In the reductase reaction, this 2-ketoacid undergoes a metal-dependent reduction by NADPH to yield (R)-2,3-dihydroxy-isovalerate. The chain is Ketol-acid reductoisomerase (NADP(+)) from Campylobacter fetus subsp. fetus (strain 82-40).